A 396-amino-acid chain; its full sequence is Enoyl-[acyl-carrier-protein] reductase [NADH] (396 aa).

NAD(+)-binding positions include 47–52, 73–74, 110–111, and 138–139; these read GASTGF, FE, DA, and LA. Tyr-224 contributes to the substrate binding site. The Proton donor role is filled by Tyr-234. Residues Lys-243 and 272–274 contribute to the NAD(+) site; that span reads LVT.

The protein belongs to the TER reductase family. As to quaternary structure, monomer.

It catalyses the reaction a 2,3-saturated acyl-[ACP] + NAD(+) = a (2E)-enoyl-[ACP] + NADH + H(+). Its pathway is lipid metabolism; fatty acid biosynthesis. Involved in the final reduction of the elongation cycle of fatty acid synthesis (FAS II). Catalyzes the reduction of a carbon-carbon double bond in an enoyl moiety that is covalently linked to an acyl carrier protein (ACP). This chain is Enoyl-[acyl-carrier-protein] reductase [NADH], found in Flavobacterium psychrophilum (strain ATCC 49511 / DSM 21280 / CIP 103535 / JIP02/86).